Here is a 283-residue protein sequence, read N- to C-terminus: MITGKTLITGVIGHPIEHSFSPPMHNNAYKLMNMDYKYVPFHVEVENLKHVITSAKTLNIKGLNVTIPHKTTIIPYLDEIDETAEKIGAVNTINFKDGIAKGYNTDGIGAIVSIEKYTSLKDKNIMIIGAGGASKAITFTLLNKNINQLIVANRSKDNAQKLITNLKNQTNFENIDFINIKKTDNVIDDVDIIINTTPIGMYPKDEVAPPIKTDKISSKHTVMDIIYNPLETQLLKQSKKQGATTIPGTHMLINQGIKAFEIFTGKTPSYESFEKPLLKHLQG.

Shikimate-binding positions include 19 to 21 and Thr-66; that span reads SFS. The active-site Proton acceptor is Lys-70. Glu-82 is an NADP(+) binding site. Residues Asn-91 and Asp-106 each contribute to the shikimate site. NADP(+)-binding positions include 129-133 and Ile-225; that span reads GAGGA. Tyr-227 is a binding site for shikimate. Gly-248 contacts NADP(+).

It belongs to the shikimate dehydrogenase family. Homodimer.

It catalyses the reaction shikimate + NADP(+) = 3-dehydroshikimate + NADPH + H(+). It functions in the pathway metabolic intermediate biosynthesis; chorismate biosynthesis; chorismate from D-erythrose 4-phosphate and phosphoenolpyruvate: step 4/7. Functionally, involved in the biosynthesis of the chorismate, which leads to the biosynthesis of aromatic amino acids. Catalyzes the reversible NADPH linked reduction of 3-dehydroshikimate (DHSA) to yield shikimate (SA). The sequence is that of Shikimate dehydrogenase (NADP(+)) from Methanosphaera stadtmanae (strain ATCC 43021 / DSM 3091 / JCM 11832 / MCB-3).